Consider the following 529-residue polypeptide: Chaperonin GroEL, chloroplastic (529 aa).

ATP is bound by residues 29–32 (TLGP), 86–90 (DGTTT), Gly-414, 480–482 (DAA), and Asp-496.

This sequence belongs to the chaperonin (HSP60) family. Forms a cylinder of 14 subunits composed of two heptameric rings stacked back-to-back. Interacts with the co-chaperonin GroES.

Its subcellular location is the plastid. The protein resides in the chloroplast. The enzyme catalyses ATP + H2O + a folded polypeptide = ADP + phosphate + an unfolded polypeptide.. In terms of biological role, together with its co-chaperonin GroES, plays an essential role in assisting protein folding. The GroEL-GroES system forms a nano-cage that allows encapsulation of the non-native substrate proteins and provides a physical environment optimized to promote and accelerate protein folding. This Guillardia theta (Cryptophyte) protein is Chaperonin GroEL, chloroplastic.